The sequence spans 387 residues: UDP-N-acetylglucosamine--N-acetylmuramyl-(pentapeptide) pyrophosphoryl-undecaprenol N-acetylglucosamine transferase (387 aa).

UDP-N-acetyl-alpha-D-glucosamine contacts are provided by residues 26 to 28 (TGG), N137, R177, S205, and Q306.

It belongs to the glycosyltransferase 28 family. MurG subfamily.

It is found in the cell inner membrane. The enzyme catalyses di-trans,octa-cis-undecaprenyl diphospho-N-acetyl-alpha-D-muramoyl-L-alanyl-D-glutamyl-meso-2,6-diaminopimeloyl-D-alanyl-D-alanine + UDP-N-acetyl-alpha-D-glucosamine = di-trans,octa-cis-undecaprenyl diphospho-[N-acetyl-alpha-D-glucosaminyl-(1-&gt;4)]-N-acetyl-alpha-D-muramoyl-L-alanyl-D-glutamyl-meso-2,6-diaminopimeloyl-D-alanyl-D-alanine + UDP + H(+). It participates in cell wall biogenesis; peptidoglycan biosynthesis. In terms of biological role, cell wall formation. Catalyzes the transfer of a GlcNAc subunit on undecaprenyl-pyrophosphoryl-MurNAc-pentapeptide (lipid intermediate I) to form undecaprenyl-pyrophosphoryl-MurNAc-(pentapeptide)GlcNAc (lipid intermediate II). In Rhodospirillum rubrum (strain ATCC 11170 / ATH 1.1.1 / DSM 467 / LMG 4362 / NCIMB 8255 / S1), this protein is UDP-N-acetylglucosamine--N-acetylmuramyl-(pentapeptide) pyrophosphoryl-undecaprenol N-acetylglucosamine transferase.